The primary structure comprises 138 residues: Large ribosomal subunit protein uL16 (138 aa).

Positions methionine 1–glutamine 13 are enriched in basic residues. Residues methionine 1 to threonine 22 are disordered.

The protein belongs to the universal ribosomal protein uL16 family. Part of the 50S ribosomal subunit.

Functionally, binds 23S rRNA and is also seen to make contacts with the A and possibly P site tRNAs. The sequence is that of Large ribosomal subunit protein uL16 from Thiobacillus denitrificans (strain ATCC 25259 / T1).